We begin with the raw amino-acid sequence, 445 residues long: Argininosuccinate synthase (445 aa).

Residues 17-25 and Ala-43 each bind ATP; that span reads AFSGGLDTS. An L-citrulline-binding site is contributed by Tyr-99. ATP is bound by residues Gly-129 and Thr-131. Residues Thr-131, Asn-135, and Asp-136 each contribute to the L-aspartate site. Asn-135 provides a ligand contact to L-citrulline. Asp-136 lines the ATP pocket. L-citrulline contacts are provided by Arg-139 and Ser-192. Position 194 (Asp-194) interacts with ATP. The L-citrulline site is built by Thr-201, Glu-203, and Glu-280.

The protein belongs to the argininosuccinate synthase family. Type 2 subfamily. As to quaternary structure, homotetramer.

It localises to the cytoplasm. It carries out the reaction L-citrulline + L-aspartate + ATP = 2-(N(omega)-L-arginino)succinate + AMP + diphosphate + H(+). Its pathway is amino-acid biosynthesis; L-arginine biosynthesis; L-arginine from L-ornithine and carbamoyl phosphate: step 2/3. The chain is Argininosuccinate synthase from Acidobacterium capsulatum (strain ATCC 51196 / DSM 11244 / BCRC 80197 / JCM 7670 / NBRC 15755 / NCIMB 13165 / 161).